A 947-amino-acid chain; its full sequence is Nonribosomal peptide synthetase ucdA (947 aa).

An adenylation (A) domain region spans residues 25-413; that stretch reads YSPHANAGYC…AGPVVFKEYF (389 aa). In terms of domain architecture, Carrier spans 585 to 665; that stretch reads APENEFERDL…DLGTALRKLQ (81 aa). An O-(pantetheine 4'-phosphoryl)serine modification is found at Ser623. A thioesterase (TE) domain region spans residues 684 to 934; that stretch reads PLWLVHPGVG…MLSPEHVFDF (251 aa).

This sequence belongs to the NRP synthetase family.

It catalyses the reaction 2 3-(4-hydroxyphenyl)pyruvate + 2 ATP = atromentin + 2 AMP + 2 diphosphate + H(+). It functions in the pathway secondary metabolite biosynthesis. Functionally, nonribosomal peptide synthetase that mediates the biosynthesis of usterphenyllins and uscandidusins, p-terphenyl derivatives. Within the pathway, ucdA condenses two 4-hydroxyphenylpyruvate (HPPA) units to produce atromentin. UcdA first activates HPPA through its A domain to AMP-HPPA. The HPPA unit is then loaded to the T domain and eventually transferred to the TE domain. Another HPPA unit is then loaded onto the T domain. The TE domain then catalyzes the condensation of the two HPPA units and the release of atromentin via cyclization. The pathway begin with the biosynthesis of 4-hydroxyphenylpyruvate (HPPA) from L-tyrosine, possibly by the aminotransferase ucdG. The nonribosomal peptide synthetase ucdA then condenses two HPPA units to produce atromentin. The key step in this pathway is the reduction and dehydration of atromentin to form a terphenyl triol intermediate, performed by the NAD-dependent dehydrogenase ucdB. Further O-methylation by the methyltransferase ucdC forms terphenyllin carrying two methoxy moieties at C-9 and C-12, and subsequent dihydroxylation at C-3 of ring A and C-15 of ring C by the flavin-dependent oxygenase ucdD leads to 3,15-dihydroxyterphenyllin. Prenylation by ucdE at position C-5 of ring A forms usterphenyllin B, and is followed by a second prenylation at position C-14 of ring C to form usterphenyllin A. The following furan ring formation that leads to uscandidusins A and B was proven to be an unexpected spontaneous non-enzymatic reaction. The sequence is that of Nonribosomal peptide synthetase ucdA from Aspergillus ustus.